A 156-amino-acid chain; its full sequence is Transcription antitermination protein NusB (156 aa).

Belongs to the NusB family.

Involved in transcription antitermination. Required for transcription of ribosomal RNA (rRNA) genes. Binds specifically to the boxA antiterminator sequence of the ribosomal RNA (rrn) operons. The protein is Transcription antitermination protein NusB of Rickettsia massiliae (strain Mtu5).